Consider the following 229-residue polypeptide: 4-hydroxy-tetrahydrodipicolinate reductase (229 aa).

Residues 10 to 15 (GSAGRM), 78 to 80 (GTT), and 102 to 105 (SSNM) each bind NAD(+). Residue H133 is the Proton donor/acceptor of the active site. Residue H134 participates in (S)-2,3,4,5-tetrahydrodipicolinate binding. Catalysis depends on K137, which acts as the Proton donor. Position 143–144 (143–144 (GT)) interacts with (S)-2,3,4,5-tetrahydrodipicolinate.

It belongs to the DapB family.

The protein localises to the cytoplasm. The catalysed reaction is (S)-2,3,4,5-tetrahydrodipicolinate + NAD(+) + H2O = (2S,4S)-4-hydroxy-2,3,4,5-tetrahydrodipicolinate + NADH + H(+). It catalyses the reaction (S)-2,3,4,5-tetrahydrodipicolinate + NADP(+) + H2O = (2S,4S)-4-hydroxy-2,3,4,5-tetrahydrodipicolinate + NADPH + H(+). It participates in amino-acid biosynthesis; L-lysine biosynthesis via DAP pathway; (S)-tetrahydrodipicolinate from L-aspartate: step 4/4. In terms of biological role, catalyzes the conversion of 4-hydroxy-tetrahydrodipicolinate (HTPA) to tetrahydrodipicolinate. This is 4-hydroxy-tetrahydrodipicolinate reductase from Bdellovibrio bacteriovorus (strain ATCC 15356 / DSM 50701 / NCIMB 9529 / HD100).